Reading from the N-terminus, the 625-residue chain is Alpha-1,3-galactosidase A (625 aa).

A signal peptide spans methionine 1–alanine 32. 5 PbH1 repeats span residues lysine 342–glycine 364, threonine 460–threonine 482, arginine 483–alanine 505, valine 516–glutamate 537, and valine 573–arginine 611.

Belongs to the glycosyl hydrolase 110 family. A subfamily.

It carries out the reaction Hydrolysis of terminal, non-reducing branched (1-&gt;3)-alpha-D-galactosidic residues, producing free D-galactose.. It catalyses the reaction Hydrolysis of terminal, non-reducing alpha-D-galactose residues in alpha-D-galactosides, including galactose oligosaccharides, galactomannans and galactolipids.. In terms of biological role, alpha-galactosidase that specifically removes branched alpha-1,3-linked galactose residues present in blood group B antigens. Has no activity toward linear alpha-1,3-linked galactose residues. The protein is Alpha-1,3-galactosidase A (glaA) of Streptomyces avermitilis (strain ATCC 31267 / DSM 46492 / JCM 5070 / NBRC 14893 / NCIMB 12804 / NRRL 8165 / MA-4680).